The following is a 462-amino-acid chain: DNA polymerase delta subunit 3 (462 aa).

At A2 the chain carries N-acetylalanine. Disordered stretches follow at residues 144 to 186 (APAE…ASQQ), 200 to 230 (TKTQ…PGKG), 254 to 384 (AVKE…RVLK), and 403 to 462 (SESC…FQKK). Polar residues predominate over residues 156–174 (QSNLQAASEAQASELTTNG). Basic and acidic residues predominate over residues 204 to 215 (DTNKETKPEARE). A compositionally biased stretch (low complexity) spans 218–230 (SASSAGGKAPGKG). Residue K256 forms a Glycyl lysine isopeptide (Lys-Gly) (interchain with G-Cter in SUMO); alternate linkage. K256 participates in a covalent cross-link: Glycyl lysine isopeptide (Lys-Gly) (interchain with G-Cter in SUMO2); alternate. K259 participates in a covalent cross-link: Glycyl lysine isopeptide (Lys-Gly) (interchain with G-Cter in SUMO2). Residues 284–305 (RKSEPGKVQQKEKSSRGKRVDL) are compositionally biased toward basic and acidic residues. Phosphoserine is present on S306. Positions 330–344 (SSEDEVFEDSPEMYE) are enriched in acidic residues. Residues 348-368 (PSPPPVSPPPDPMPKTEPPPV) show a composition bias toward pro residues. 2 positions are modified to phosphoserine: S403 and S405. T407 carries the post-translational modification Phosphothreonine. S409 carries the post-translational modification Phosphoserine. A compositionally biased stretch (low complexity) spans 416–427 (KPASAHKPPAAA). Positions 428-437 (VKREPREERK) are enriched in basic and acidic residues. Residue K429 forms a Glycyl lysine isopeptide (Lys-Gly) (interchain with G-Cter in SUMO); alternate linkage. Residue K429 forms a Glycyl lysine isopeptide (Lys-Gly) (interchain with G-Cter in SUMO2); alternate linkage. A compositionally biased stretch (polar residues) spans 451–462 (RQVSITGFFQKK). Residues 452–459 (QVSITGFF) carry the PIP-box motif. Position 454 is a phosphoserine (S454).

In terms of assembly, component of both the DNA polymerase delta and DNA polymerase zeta complexes. The tetrameric DNA polymerase delta complex (Pol-delta4), which consists of POLD1/p125, POLD2/p50, POLD3/p66/p68 and POLD4/p12, with POLD1 bearing DNA polymerase and 3' to 5' proofreading exonuclease activities. Within this complex, directly interacts with POLD2. Following stress caused by DNA damaging agents or by replication stress, POLD4 is degraded and Pol-delta4 is converted into a trimeric form of the complex (Pol-delta3), which consists of POLD1, POLD2 and POLD3. Pol-delta3 is the major form occurring at S phase replication sites, as well as DNA damage sites. Directly interacts with PCNA, as do POLD1 and POLD4; this interaction stimulates Pol-delta polymerase activity. POLD3 phosphorylation at Ser-454 impairs PCNA binding. Component of the DNA polymerase zeta complex (POLZ), which consists of REV3L, MAD2L2, POLD2 and POLD3, with REV3L bearing DNA polymerase catalytic activity. The DNA polymerase delta complex interacts with POLDIP2; this interaction is probably mediated through direct binding to POLD2. In terms of processing, ubiquitinated, but not targeted to the proteasome. Sumoylated. Sumoylation by SUMO3 may be predominant. Phosphorylation at Ser-454 is thought to decrease the affinity for PCNA and Pol-delta4 processivity. May be phosphorylated by CDK1-cyclin-A complex, as well as CDK2-cyclin-A and CDK2-cyclin-E complexes. PCNA interferes with CDK-cyclin phosphorylation.

The protein resides in the cytoplasm. Its subcellular location is the nucleus. Its function is as follows. Accessory component of both the DNA polymerase delta complex and the DNA polymerase zeta complex. As a component of the trimeric and tetrameric DNA polymerase delta complexes (Pol-delta3 and Pol-delta4, respectively), plays a role in high fidelity genome replication, including in lagging strand synthesis, and repair. Required for optimal Pol-delta activity. Stabilizes the Pol-delta complex and plays a major role in Pol-delta stimulation by PCNA. Pol-delta3 and Pol-delta4 are characterized by the absence or the presence of POLD4. They exhibit differences in catalytic activity. Most notably, Pol-delta3 shows higher proofreading activity than Pol-delta4. Although both Pol-delta3 and Pol-delta4 process Okazaki fragments in vitro, Pol-delta3 may also be better suited to fulfill this task, exhibiting near-absence of strand displacement activity compared to Pol-delta4 and stalling on encounter with the 5'-blocking oligonucleotides. Pol-delta3 idling process may avoid the formation of a gap, while maintaining a nick that can be readily ligated. Along with DNA polymerase kappa, DNA polymerase delta carries out approximately half of nucleotide excision repair (NER) synthesis following UV irradiation. In this context, POLD3, along with PCNA and RFC1-replication factor C complex, is required to recruit POLD1, the catalytic subunit of the polymerase delta complex, to DNA damage sites. Under conditions of DNA replication stress, required for the repair of broken replication forks through break-induced replication (BIR). Involved in the translesion synthesis (TLS) of templates carrying O6-methylguanine or abasic sites performed by Pol-delta4, independently of DNA polymerase zeta (REV3L) or eta (POLH). Facilitates abasic site bypass by DNA polymerase delta by promoting extension from the nucleotide inserted opposite the lesion. Also involved in TLS, as a component of the tetrameric DNA polymerase zeta complex. Along with POLD2, dramatically increases the efficiency and processivity of DNA synthesis of the DNA polymerase zeta complex compared to the minimal zeta complex, consisting of only REV3L and REV7. This is DNA polymerase delta subunit 3 (Pold3) from Mus musculus (Mouse).